Consider the following 382-residue polypeptide: Gas vesicle protein C1 (382 aa).

Residues 1–18 (MSVTDKRDEMSTARDKFA) show a composition bias toward basic and acidic residues. Positions 1–21 (MSVTDKRDEMSTARDKFAESQ) are disordered. 7 consecutive repeat copies span residues 22-60 (QEFE…TNTT), 61-92 (DAFH…REMQ), 93-130 (DAFE…NSTH), 131-168 (GAFE…IAVQ), 169-200 (DAFD…DATA), 201-240 (DAFA…ETTE), and 241-284 (DAFV…VSPD). A 7 X approximate tandem repeats region spans residues 22-284 (QEFESYADEF…VEAEAEVSPD (263 aa)). The span at 260–302 (GAAEAEAEPVEADADVEAEAEVSPDEAGGESAGTEEEETEPAE) shows a compositional bias: acidic residues. The disordered stretch occupies residues 260–382 (GAAEAEAEPV…DVPLRPDDKT (123 aa)). Low complexity predominate over residues 303-316 (VETAAPEVEGSPAD). The span at 317-336 (TADEAEDTEAEEETEEEAPE) shows a compositional bias: acidic residues. Basic and acidic residues predominate over residues 365 to 382 (EYRDEYGEDVPLRPDDKT).

Belongs to the halobacterial gas vesicle GvpC family. In terms of assembly, forms homodimers, interacts with GvpF1, GvpH1, GvpI1, GvpL1, GvpN1 and GvpO1 via its C-terminus (residues 329-382).

It localises to the gas vesicle. The protein resides in the cytoplasm. In terms of biological role, confers stability, involved in shaping gas vesicles. Gas vesicles are hollow, gas filled proteinaceous nanostructures found in several microbial planktonic microorganisms. They allow positioning of halobacteria at the optimal depth for growth in the poorly aerated, shallow brine pools of their habitat. Functionally, expression of a 9.5 kb p-vac DNA fragment containing 2 divergently transcribed regions (gvpD-gvpE-gvpF-gvpG-gvpH-gvpI-gvpJ-gvpK-gvpL-gvpM and gvpA-gvpC-gvpN-gvpO) allows H.volcanii to produce gas vesicles. A similar region restores gas vesicle production in H.halobium without the p-vac locus, but it still has the c-vac locus. The chain is Gas vesicle protein C1 (gvpC1) from Halobacterium salinarum (strain ATCC 700922 / JCM 11081 / NRC-1) (Halobacterium halobium).